A 135-amino-acid polypeptide reads, in one-letter code: Mediator of RNA polymerase II transcription subunit 10 (135 aa).

This sequence belongs to the Mediator complex subunit 10 family. As to quaternary structure, component of the Mediator complex, which is composed of MED1, MED4, MED6, MED7, MED8, MED9, MED10, MED11, MED12, MED13, MED13L, MED14, MED15, MED16, MED17, MED18, MED19, MED20, MED21, MED22, MED23, MED24, MED25, MED26, MED27, MED29, MED30, MED31, CCNC, CDK8 and CDC2L6/CDK11. The MED12, MED13, CCNC and CDK8 subunits form a distinct module termed the CDK8 module. Mediator containing the CDK8 module is less active than Mediator lacking this module in supporting transcriptional activation. Individual preparations of the Mediator complex lacking one or more distinct subunits have been variously termed ARC, CRSP, DRIP, PC2, SMCC and TRAP.

Its subcellular location is the nucleus. Functionally, component of the Mediator complex, a coactivator involved in the regulated transcription of nearly all RNA polymerase II-dependent genes. Mediator functions as a bridge to convey information from gene-specific regulatory proteins to the basal RNA polymerase II transcription machinery. Mediator is recruited to promoters by direct interactions with regulatory proteins and serves as a scaffold for the assembly of a functional preinitiation complex with RNA polymerase II and the general transcription factors. In Homo sapiens (Human), this protein is Mediator of RNA polymerase II transcription subunit 10 (MED10).